The sequence spans 88 residues: Sec-independent protein translocase protein TatA (88 aa).

The helical transmembrane segment at 3–23 (IFGVGLPEVTVILILALLIFG) threads the bilayer. Residues 56–66 (MKEEDKDESPK) show a composition bias toward basic and acidic residues. The disordered stretch occupies residues 56 to 88 (MKEEDKDESPKSIESNQSNEINQEKIDSENSNN). Residues 67-76 (SIESNQSNEI) are compositionally biased toward polar residues. Positions 77–88 (NQEKIDSENSNN) are enriched in basic and acidic residues.

It belongs to the TatA/E family. As to quaternary structure, forms a complex with TatC.

It localises to the cell inner membrane. Functionally, part of the twin-arginine translocation (Tat) system that transports large folded proteins containing a characteristic twin-arginine motif in their signal peptide across membranes. TatA could form the protein-conducting channel of the Tat system. The polypeptide is Sec-independent protein translocase protein TatA (Prochlorococcus marinus (strain MIT 9301)).